A 191-amino-acid chain; its full sequence is Orotate phosphoribosyltransferase (191 aa).

114–122 (EDVVTTGKS) contacts 5-phospho-alpha-D-ribose 1-diphosphate. Thr-118 and Arg-146 together coordinate orotate.

The protein belongs to the purine/pyrimidine phosphoribosyltransferase family. PyrE subfamily. In terms of assembly, homodimer. Mg(2+) is required as a cofactor.

It catalyses the reaction orotidine 5'-phosphate + diphosphate = orotate + 5-phospho-alpha-D-ribose 1-diphosphate. Its pathway is pyrimidine metabolism; UMP biosynthesis via de novo pathway; UMP from orotate: step 1/2. Functionally, catalyzes the transfer of a ribosyl phosphate group from 5-phosphoribose 1-diphosphate to orotate, leading to the formation of orotidine monophosphate (OMP). This is Orotate phosphoribosyltransferase from Clostridium botulinum (strain ATCC 19397 / Type A).